Consider the following 143-residue polypeptide: Nucleoside diphosphate kinase (143 aa).

ATP-binding residues include Lys-11, Phe-59, Arg-87, Thr-93, Arg-104, and Asn-114. His-117 serves as the catalytic Pros-phosphohistidine intermediate.

Belongs to the NDK family. As to quaternary structure, homotetramer. Mg(2+) is required as a cofactor.

Its subcellular location is the cytoplasm. It carries out the reaction a 2'-deoxyribonucleoside 5'-diphosphate + ATP = a 2'-deoxyribonucleoside 5'-triphosphate + ADP. It catalyses the reaction a ribonucleoside 5'-diphosphate + ATP = a ribonucleoside 5'-triphosphate + ADP. Major role in the synthesis of nucleoside triphosphates other than ATP. The ATP gamma phosphate is transferred to the NDP beta phosphate via a ping-pong mechanism, using a phosphorylated active-site intermediate. The protein is Nucleoside diphosphate kinase of Shewanella loihica (strain ATCC BAA-1088 / PV-4).